The primary structure comprises 595 residues: UvrABC system protein C (595 aa).

The region spanning 14-91 (SNPGCYLHKD…IQENMPKFNI (78 aa)) is the GIY-YIG domain. Positions 196 to 231 (DKIVNQLKAKMKDMSDQMEFERAAEYRDLIEAVSTL) constitute a UVR domain.

It belongs to the UvrC family. Interacts with UvrB in an incision complex.

It is found in the cytoplasm. In terms of biological role, the UvrABC repair system catalyzes the recognition and processing of DNA lesions. UvrC both incises the 5' and 3' sides of the lesion. The N-terminal half is responsible for the 3' incision and the C-terminal half is responsible for the 5' incision. This is UvrABC system protein C from Streptococcus thermophilus (strain CNRZ 1066).